Reading from the N-terminus, the 228-residue chain is Ribonuclease 3 (228 aa).

Positions 8–130 constitute an RNase III domain; sequence LKRLERRVDY…IIGAAFLDSD (123 aa). Glu43 is a Mg(2+) binding site. The active site involves Asp47. The Mg(2+) site is built by Asp116 and Glu119. Glu119 is a catalytic residue. The 70-residue stretch at 157–226 folds into the DRBM domain; that stretch reads DPKTRLQEHL…ANKMLDSLSG (70 aa).

The protein belongs to the ribonuclease III family. As to quaternary structure, homodimer. It depends on Mg(2+) as a cofactor.

It localises to the cytoplasm. The catalysed reaction is Endonucleolytic cleavage to 5'-phosphomonoester.. In terms of biological role, digests double-stranded RNA. Involved in the processing of primary rRNA transcript to yield the immediate precursors to the large and small rRNAs (23S and 16S). Processes some mRNAs, and tRNAs when they are encoded in the rRNA operon. Processes pre-crRNA and tracrRNA of type II CRISPR loci if present in the organism. This chain is Ribonuclease 3, found in Psychromonas ingrahamii (strain DSM 17664 / CCUG 51855 / 37).